The sequence spans 156 residues: Small ribosomal subunit protein bS6 (156 aa).

Residues 98 to 156 (GHDFRDQRSHHGQAGEFRKREPQQKSKEQSEFSKEKKSFSKSVTKKTVVSKPKETKEEK) form a disordered region. Basic and acidic residues predominate over residues 113 to 135 (EFRKREPQQKSKEQSEFSKEKKS). Residues 137 to 147 (SKSVTKKTVVS) show a composition bias toward low complexity.

Belongs to the bacterial ribosomal protein bS6 family.

Functionally, binds together with bS18 to 16S ribosomal RNA. The protein is Small ribosomal subunit protein bS6 of Mycoplasmopsis synoviae (strain 53) (Mycoplasma synoviae).